The chain runs to 278 residues: Alcohol dehydrogenase-related 31 kDa protein (278 aa).

Residue 11-34 coordinates NAD(+); that stretch reads YVADCGGIALETSKVLMTKNIAKL. Residue Ser-139 participates in substrate binding. Tyr-152 serves as the catalytic Proton acceptor.

It belongs to the short-chain dehydrogenases/reductases (SDR) family.

The sequence is that of Alcohol dehydrogenase-related 31 kDa protein (Adhr) from Drosophila pseudoobscura pseudoobscura (Fruit fly).